Reading from the N-terminus, the 575-residue chain is Chaperonin CPN60-2, mitochondrial (575 aa).

Residues 1 to 32 (MHRFASGLASKARLARKGANQIASRSSWSRNY) constitute a mitochondrion transit peptide.

The protein belongs to the chaperonin (HSP60) family.

Its subcellular location is the mitochondrion. Its function is as follows. Implicated in mitochondrial protein import and macromolecular assembly. May facilitate the correct folding of imported proteins. May also prevent misfolding and promote the refolding and proper assembly of unfolded polypeptides generated under stress conditions in the mitochondrial matrix. The polypeptide is Chaperonin CPN60-2, mitochondrial (CPN60-2) (Cucurbita maxima (Pumpkin)).